Consider the following 264-residue polypeptide: 14-3-3 protein homolog (264 aa).

Over residues S236–E258 the composition is skewed to low complexity. Residues S236 to E264 form a disordered region.

The protein belongs to the 14-3-3 family.

This chain is 14-3-3 protein homolog (BMH1), found in Candida albicans (strain SC5314 / ATCC MYA-2876) (Yeast).